The chain runs to 476 residues: Adenosylhomocysteinase (476 aa).

Positions 62, 141, and 201 each coordinate substrate. 202–204 contacts NAD(+); that stretch reads TTT. Substrate is bound by residues Lys-231 and Asp-235. NAD(+) contacts are provided by residues Asn-236, 265-270, Glu-288, Asn-323, 344-346, and Asn-389; these read GYGDVG and IGH.

This sequence belongs to the adenosylhomocysteinase family. The cofactor is NAD(+).

It is found in the cytoplasm. It catalyses the reaction S-adenosyl-L-homocysteine + H2O = L-homocysteine + adenosine. Its pathway is amino-acid biosynthesis; L-homocysteine biosynthesis; L-homocysteine from S-adenosyl-L-homocysteine: step 1/1. Functionally, may play a key role in the regulation of the intracellular concentration of adenosylhomocysteine. This Delftia acidovorans (strain DSM 14801 / SPH-1) protein is Adenosylhomocysteinase.